Here is a 722-residue protein sequence, read N- to C-terminus: Polyribonucleotide nucleotidyltransferase (722 aa).

The Mg(2+) site is built by Asp487 and Asp493. Residues 554 to 613 form the KH domain; it reads PRMVSFKIHPDKIREVIGKGGATIQALTKETGCSIDIKDDGTVTIASTSAEGMAEAKARI. Residues 623–691 enclose the S1 motif domain; that stretch reads GKIYEGPVVK…ERGRLRLSLK (69 aa).

It belongs to the polyribonucleotide nucleotidyltransferase family. Mg(2+) is required as a cofactor.

Its subcellular location is the cytoplasm. It catalyses the reaction RNA(n+1) + phosphate = RNA(n) + a ribonucleoside 5'-diphosphate. In terms of biological role, involved in mRNA degradation. Catalyzes the phosphorolysis of single-stranded polyribonucleotides processively in the 3'- to 5'-direction. In Polynucleobacter necessarius subsp. necessarius (strain STIR1), this protein is Polyribonucleotide nucleotidyltransferase.